Consider the following 393-residue polypeptide: 5-azacytidine-induced protein 2 (393 aa).

A homodimerization region spans residues 1-198 (MDALVEDDIC…IELQKAKQTD (198 aa)). The stretch at 40–198 (ALVTAYEDIK…IELQKAKQTD (159 aa)) forms a coiled coil. An interaction with TBK1 and IKBKE region spans residues 217 to 258 (SDNMQSAYWELKREMSNLHLVTQVQAELLRKLKTPAAIKKAC). The residue at position 319 (serine 319) is a Phosphoserine. Disordered stretches follow at residues 321-340 (TDHE…HNSY) and 345-393 (LEDN…HYKH). The residue at position 354 (serine 354) is a Phosphoserine. Residues 384-393 (QHNQNCHYKH) show a composition bias toward polar residues.

In terms of assembly, homodimer. Interacts with IKBKE, TBK1 and TICAM1. Interacts with TAX1BP1. Interacts with CALCOCO2. Ubiquitinated via 'Lys-48'-linked polyubiquitination by TRIM38, leading to its degradation.

The protein localises to the cytoplasm. Its function is as follows. Adapter protein which binds TBK1 and IKBKE playing a role in antiviral innate immunity. Activates serine/threonine-protein kinase TBK1 and facilitates its oligomerization. Enhances the phosphorylation of NF-kappa-B p65 subunit RELA by TBK1. Promotes TBK1-induced as well as TNF-alpha or PMA-induced activation of NF-kappa-B. Participates in IFNB promoter activation via TICAM1. The sequence is that of 5-azacytidine-induced protein 2 (AZI2) from Bos taurus (Bovine).